Consider the following 78-residue polypeptide: U29-theraphotoxin-Cg1a (78 aa).

An N-terminal signal peptide occupies residues 1–19; that stretch reads MRYQTVFWILLIALCTVNP. 4 cysteine pairs are disulfide-bonded: cysteine 42/cysteine 56, cysteine 49/cysteine 60, cysteine 55/cysteine 77, and cysteine 67/cysteine 73.

Belongs to the neurotoxin 13 (insecticidal toxin ABC) family. 03 (JZTX-59) subfamily. Expressed by the venom gland.

It localises to the secreted. In terms of biological role, probable ion channel inhibitor. The sequence is that of U29-theraphotoxin-Cg1a from Chilobrachys guangxiensis (Chinese earth tiger tarantula).